Here is a 239-residue protein sequence, read N- to C-terminus: tRNA (guanine-N(7)-)-methyltransferase (239 aa).

The S-adenosyl-L-methionine site is built by Glu-69, Glu-94, Asp-121, and Asp-144. Asp-144 is a catalytic residue. Residues Lys-148, Asp-180, and Thr-217–Glu-220 each bind substrate.

It belongs to the class I-like SAM-binding methyltransferase superfamily. TrmB family. As to quaternary structure, monomer.

The catalysed reaction is guanosine(46) in tRNA + S-adenosyl-L-methionine = N(7)-methylguanosine(46) in tRNA + S-adenosyl-L-homocysteine. It participates in tRNA modification; N(7)-methylguanine-tRNA biosynthesis. Catalyzes the formation of N(7)-methylguanine at position 46 (m7G46) in tRNA. The sequence is that of tRNA (guanine-N(7)-)-methyltransferase from Buchnera aphidicola subsp. Schizaphis graminum (strain Sg).